The sequence spans 182 residues: Prorelaxin (182 aa).

An N-terminal signal peptide occupies residues 1-25 (MRRLFLSHVLGAWLLLSQLPRELSG). At glutamine 26 the chain carries Pyrrolidone carboxylic acid. Cystine bridges form between cysteine 35/cysteine 169, cysteine 47/cysteine 182, and cysteine 168/cysteine 173. The propeptide at 54 to 156 (KTVLRLEEPG…LKNLGLDKHS (103 aa)) is connecting peptide. Residues 161-162 (MI) constitute a propeptide that is removed on maturation. Position 163 is a pyrrolidone carboxylic acid (glutamine 163).

It belongs to the insulin family. In terms of assembly, heterodimer of a B chain and an A chain linked by two disulfide bonds.

The protein resides in the secreted. Relaxin is an ovarian hormone that acts with estrogen to produce dilatation of the birth canal in many mammals. In Equus caballus (Horse), this protein is Prorelaxin (RLN).